The primary structure comprises 512 residues: ATP synthase subunit alpha (512 aa).

G169–T176 lines the ATP pocket.

It belongs to the ATPase alpha/beta chains family. F-type ATPases have 2 components, CF(1) - the catalytic core - and CF(0) - the membrane proton channel. CF(1) has five subunits: alpha(3), beta(3), gamma(1), delta(1), epsilon(1). CF(0) has three main subunits: a(1), b(2) and c(9-12). The alpha and beta chains form an alternating ring which encloses part of the gamma chain. CF(1) is attached to CF(0) by a central stalk formed by the gamma and epsilon chains, while a peripheral stalk is formed by the delta and b chains.

Its subcellular location is the cell inner membrane. It carries out the reaction ATP + H2O + 4 H(+)(in) = ADP + phosphate + 5 H(+)(out). Produces ATP from ADP in the presence of a proton gradient across the membrane. The alpha chain is a regulatory subunit. This chain is ATP synthase subunit alpha, found in Orientia tsutsugamushi (strain Boryong) (Rickettsia tsutsugamushi).